The following is a 277-amino-acid chain: Caspase-3 (277 aa).

Methionine 1 is subject to N-acetylmethionine. Propeptides lie at residues 1–9 (MENSENSVD) and 10–28 (AKSI…KSMD). Lysine 11 carries the N6-acetyllysine modification. Serine 26 is subject to Phosphoserine. Residues histidine 121 and cysteine 163 contribute to the active site. At cysteine 163 the chain carries S-nitrosocysteine; in inhibited form.

The protein belongs to the peptidase C14A family. In terms of assembly, heterotetramer that consists of two anti-parallel arranged heterodimers, each one formed by a 17 kDa (p17) and a 12 kDa (p12) subunit. Interacts with BIRC6/bruce. Cleavage by granzyme B, caspase-6, caspase-8 and caspase-10 generates the two active subunits. Additional processing of the propeptides is likely due to the autocatalytic activity of the activated protease. Active heterodimers between the small subunit of caspase-7 protease and the large subunit of caspase-3 also occur and vice versa. In terms of processing, S-nitrosylated on its catalytic site cysteine in unstimulated cell lines and denitrosylated upon activation of the Fas apoptotic pathway, associated with an increase in intracellular caspase activity. Fas therefore activates caspase-3 not only by inducing the cleavage of the caspase zymogen to its active subunits, but also by stimulating the denitrosylation of its active site thiol. Post-translationally, ubiquitinated by BIRC6; this activity is inhibited by DIABLO/SMAC.

The protein localises to the cytoplasm. It catalyses the reaction Strict requirement for an Asp residue at positions P1 and P4. It has a preferred cleavage sequence of Asp-Xaa-Xaa-Asp-|- with a hydrophobic amino-acid residue at P2 and a hydrophilic amino-acid residue at P3, although Val or Ala are also accepted at this position.. Its activity is regulated as follows. Inhibited by BIRC6; following inhibition of BIRC6-caspase binding by DIABLO/SMAC, BIRC6 is subjected to caspase cleavage, leading to an increase in active caspases. Functionally, involved in the activation cascade of caspases responsible for apoptosis execution. At the onset of apoptosis, it proteolytically cleaves poly(ADP-ribose) polymerase PARP1 at a '216-Asp-|-Gly-217' bond. Cleaves and activates sterol regulatory element binding proteins (SREBPs) between the basic helix-loop-helix leucine zipper domain and the membrane attachment domain. Cleaves and activates caspase-6, -7 and -9 (CASP6, CASP7 and CASP9, respectively). Cleaves and inactivates interleukin-18 (IL18). Triggers cell adhesion in sympathetic neurons through RET cleavage. Cleaves IL-1 beta between an Asp and an Ala, releasing the mature cytokine which is involved in a variety of inflammatory processes. Cleaves and inhibits serine/threonine-protein kinase AKT1 in response to oxidative stress. Acts as an inhibitor of type I interferon production during virus-induced apoptosis by mediating cleavage of antiviral proteins CGAS, IRF3 and MAVS, thereby preventing cytokine overproduction. Also involved in pyroptosis by mediating cleavage and activation of gasdermin-E (GSDME). Cleaves XRCC4 and phospholipid scramblase proteins XKR4, XKR8 and XKR9, leading to promote phosphatidylserine exposure on apoptotic cell surface. Cleaves BIRC6 following inhibition of BIRC6-caspase binding by DIABLO/SMAC. The chain is Caspase-3 (CASP3) from Felis catus (Cat).